Reading from the N-terminus, the 59-residue chain is MICYNQQSTEPPTTKTCSEGQCYKKTWSDHRGTIIERGCACPNVKPGVKISCCSSDKCR.

4 disulfides stabilise this stretch: Cys-3–Cys-22, Cys-17–Cys-39, Cys-41–Cys-52, and Cys-53–Cys-58.

It belongs to the three-finger toxin family. Short-chain subfamily. Type I alpha-neurotoxin sub-subfamily. As to expression, expressed by the venom gland.

It localises to the secreted. Its function is as follows. Produces peripheral paralysis by blocking neuromuscular transmission at the postsynaptic site. Binds to and inhibits the endogenous nicotinic acetylcholine receptors (nAChR) in human rhabdomyosarcoma TE 671 cell line with an IC(50) of 48.2 mM. This neurotoxin is lethal to mice by intraperitoneal injection and to zebrafish by injection at the back of the dorsolateral region. The protein is Three-finger toxin MS1 of Micrurus surinamensis (Surinam coral snake).